We begin with the raw amino-acid sequence, 194 residues long: Small ribosomal subunit protein uS4c (194 aa).

In terms of domain architecture, S4 RNA-binding spans 82-143 (MRLDNILFRL…KQRSKALIQD (62 aa)).

This sequence belongs to the universal ribosomal protein uS4 family. Part of the 30S ribosomal subunit. Contacts protein S5. The interaction surface between S4 and S5 is involved in control of translational fidelity.

It localises to the plastid. It is found in the chloroplast. One of the primary rRNA binding proteins, it binds directly to 16S rRNA where it nucleates assembly of the body of the 30S subunit. In terms of biological role, with S5 and S12 plays an important role in translational accuracy. The protein is Small ribosomal subunit protein uS4c (rps4) of Bobartia gladiata (Sword rush-lily).